The chain runs to 535 residues: Arginine-containing cyclodipeptide synthase anoA (535 aa).

Residues 93–114 are disordered; sequence LLSPPREPGPIDSETKTREKKS. The segment covering 105–114 has biased composition (basic and acidic residues); that stretch reads SETKTREKKS. The Conserved DDXXE motif motif lies at 424 to 428; it reads DDIAE.

It belongs to the arginine-containing cyclodipeptide synthase family.

The enzyme catalyses L-tryptophyl-tRNA(Trp) + L-arginyl-tRNA(Arg) = cyclo(L-arginyl-L-tryptophyl) + tRNA(Trp) + tRNA(Arg) + H(+). The protein operates within secondary metabolite biosynthesis. Its function is as follows. Arginine-containing cyclodipeptide synthase; part of the cluster that mediates the biosynthesis of a highly modified cyclo-arginine-tryptophan dipeptide (cRW). Within the pathway, AnoA acts as the scaffold-generating enzyme and is responsible for formation of the cyclo-Arg-Trp diketopiperazine (cRW) from L-arginyl-tRNA(Arg) + L-tryptophanyl-tRNA(Trp). Additional enzymes from the cluster then further modify the cyclo-Arg-Asp diketopiperazine (cRW) scaffold. The sequence is that of Arginine-containing cyclodipeptide synthase anoA from Aspergillus nomiae (Aspergillus nomius).